A 425-amino-acid chain; its full sequence is UDP-N-acetylglucosamine 1-carboxyvinyltransferase (425 aa).

Phosphoenolpyruvate is bound at residue 23 to 24; it reads KN. A UDP-N-acetyl-alpha-D-glucosamine-binding site is contributed by arginine 100. The active-site Proton donor is the cysteine 124. Cysteine 124 is subject to 2-(S-cysteinyl)pyruvic acid O-phosphothioketal. UDP-N-acetyl-alpha-D-glucosamine is bound by residues 169-172, aspartate 313, and valine 335; that span reads KVSV.

Belongs to the EPSP synthase family. MurA subfamily.

The protein localises to the cytoplasm. It carries out the reaction phosphoenolpyruvate + UDP-N-acetyl-alpha-D-glucosamine = UDP-N-acetyl-3-O-(1-carboxyvinyl)-alpha-D-glucosamine + phosphate. It participates in cell wall biogenesis; peptidoglycan biosynthesis. In terms of biological role, cell wall formation. Adds enolpyruvyl to UDP-N-acetylglucosamine. The protein is UDP-N-acetylglucosamine 1-carboxyvinyltransferase of Wolbachia pipientis subsp. Culex pipiens (strain wPip).